The following is a 512-amino-acid chain: Ferrochelatase-2, chloroplastic (512 aa).

Positions 1 to 32 are disordered; the sequence is MNCPAMTASPSSSSSSSYSTFRPPPPLLPQLS. Residues 1 to 83 constitute a chloroplast transit peptide; it reads MNCPAMTASP…SNPLNISSSS (83 aa). The span at 9–21 shows a compositional bias: low complexity; sequence SPSSSSSSSYSTF. Valine 84 bears the N-acetylvaline mark.

Belongs to the ferrochelatase family. As to expression, expressed in leaves and flowers.

It is found in the plastid. The protein resides in the chloroplast membrane. The protein localises to the chloroplast thylakoid membrane. The enzyme catalyses heme b + 2 H(+) = protoporphyrin IX + Fe(2+). Its pathway is porphyrin-containing compound metabolism; protoheme biosynthesis; protoheme from protoporphyrin-IX: step 1/1. In terms of biological role, catalyzes the last step of heme biosynthesis by inserting ferrous iron into protoporphyrin IX to produce protoheme. Produces heme for photosynthetic cytochromes, and for proteins involved in abiotic and biotic stress responses. May play a role in the quality control of individual chloroplasts during photo-oxidative stress through regulation of heme biosynthesis. The chain is Ferrochelatase-2, chloroplastic from Arabidopsis thaliana (Mouse-ear cress).